Here is a 333-residue protein sequence, read N- to C-terminus: Procathepsin L (333 aa).

The first 17 residues, 1–17 (MNPTLILAAFCLGIASA), serve as a signal peptide directing secretion. The propeptide at 18–113 (TLTFDHSLEA…KVFQEPLFYE (96 aa)) is activation peptide. Glu122 lines the Zn(2+) pocket. 2 cysteine pairs are disulfide-bonded: Cys135-Cys178 and Cys169-Cys211. The active site involves Cys138. Positions 163, 184, 199, 205, and 209 each coordinate Zn(2+). Residue Asn221 is glycosylated (N-linked (GlcNAc...) asparagine). Zn(2+)-binding residues include Asp227, Asp250, His253, Asp273, and Asp275. Cysteines 269 and 322 form a disulfide. His276 is a catalytic residue. Positions 289–291 (ESD) are excised as a propeptide. Asn300 is a catalytic residue.

This sequence belongs to the peptidase C1 family. Dimer of a heavy and a light chain linked by disulfide bonds. Interacts with Long isoform of CD74/Ii chain; the interaction stabilizes the conformation of mature CTSL. During export along the endocytic pathway, pro-CTSL undergoes several proteolytic cleavages to generate the CTSL single-chain and two-chain mature forms, composed of a heavy chain linked to a light chain by disulfide bonds. Autocleavage; produces the single-chain CTSL after cleavage of the propeptide. The cleavage can be intermolecular.

Its subcellular location is the lysosome. It localises to the apical cell membrane. It is found in the cytoplasmic vesicle. The protein resides in the secretory vesicle. The protein localises to the chromaffin granule. Its subcellular location is the secreted. It localises to the extracellular space. It is found in the nucleus. The catalysed reaction is Specificity close to that of papain. As compared to cathepsin B, cathepsin L exhibits higher activity toward protein substrates, but has little activity on Z-Arg-Arg-NHMec, and no peptidyl-dipeptidase activity.. Its activity is regulated as follows. Inhibited by the propeptide produced by autocleavage. Long isoform of CD74/Ii chain stabilizes the conformation of mature CTSL by binding to its active site and serving as a chaperone to help maintain a pool of mature enzyme in endocytic compartments and extracellular space of APCs. IFNG enhances the conversion into the CTSL mature and active form. Inhibited by CST6. Inhibited by the glycopeptide antibiotic teicoplanin. Inhibited by amantadine. In terms of biological role, thiol protease important for the overall degradation of proteins in lysosomes. Plays a critical for normal cellular functions such as general protein turnover, antigen processing and bone remodeling. Involved in the solubilization of cross-linked TG/thyroglobulin and in the subsequent release of thyroid hormone thyroxine (T4) by limited proteolysis of TG/thyroglobulin in the thyroid follicle lumen. In neuroendocrine chromaffin cells secretory vesicles, catalyzes the prohormone proenkephalin processing to the active enkephalin peptide neurotransmitter. In thymus, regulates CD4(+) T cell positive selection by generating the major histocompatibility complex class II (MHCII) bound peptide ligands presented by cortical thymic epithelial cells. Also mediates invariant chain processing in cortical thymic epithelial cells. Major elastin-degrading enzyme at neutral pH. Accumulates as a mature and active enzyme in the extracellular space of antigen presenting cells (APCs) to regulate degradation of the extracellular matrix in the course of inflammation. Secreted form generates endostatin from COL18A1. Critical for cardiac morphology and function. Plays an important role in hair follicle morphogenesis and cycling, as well as epidermal differentiation. Required for maximal stimulation of steroidogenesis by TIMP1. (Microbial infection) In cells lacking TMPRSS2 expression, facilitates human coronaviruses SARS-CoV and SARS-CoV-2 infections via a slow acid-activated route with the proteolysis of coronavirus spike (S) glycoproteins in lysosome for entry into host cell. Proteolysis within lysosomes is sufficient to activate membrane fusion by coronaviruses SARS-CoV and EMC (HCoV-EMC) S as well as Zaire ebolavirus glycoproteins. Its function is as follows. Functions in the regulation of cell cycle progression through proteolytic processing of the CUX1 transcription factor. Translation initiation at downstream start sites allows the synthesis of isoforms that are devoid of a signal peptide and localize to the nucleus where they cleave the CUX1 transcription factor and modify its DNA binding properties. In Homo sapiens (Human), this protein is Procathepsin L.